Reading from the N-terminus, the 248-residue chain is Probable transcriptional regulatory protein LAR_0538 (248 aa).

The disordered stretch occupies residues 1 to 22; it reads MSGHSKWHNIQGRKNAQDAKRG.

This sequence belongs to the TACO1 family.

The protein localises to the cytoplasm. This Limosilactobacillus reuteri subsp. reuteri (strain JCM 1112) (Lactobacillus reuteri) protein is Probable transcriptional regulatory protein LAR_0538.